Here is a 272-residue protein sequence, read N- to C-terminus: HTH-type transcriptional repressor AllR (272 aa).

Residues 1 to 20 (MTEVRRRGRPGQAEPTAQKG) are disordered. The region spanning 21-83 (AQALERGIAI…SQLGWWHIGL (63 aa)) is the HTH iclR-type domain. Positions 43–62 (VSDISGSLDLPLSTTFRLLK) form a DNA-binding region, H-T-H motif. The IclR-ED domain occupies 98–267 (VLSVAGPFMH…AKDISTALGL (170 aa)). Glyoxylate is bound by residues 154–156 (SGA), D207, C217, and 234–236 (SIS).

In terms of biological role, negative regulator of allantoin and glyoxylate utilization operons. Binds to the gcl promoter and to the allS-allA intergenic region. The sequence is that of HTH-type transcriptional repressor AllR (allR) from Salmonella paratyphi A (strain ATCC 9150 / SARB42).